The following is a 512-amino-acid chain: CaM kinase-like vesicle-associated protein (512 aa).

Residues 24–286 (YDLGQVIKTE…AEEAISHEWI (263 aa)) enclose the Protein kinase domain. The interval 328–347 (APEQSGTAATQSASDAATPG) is disordered. Over residues 332 to 347 (SGTAATQSASDAATPG) the composition is skewed to low complexity. Position 392 is a phosphoserine (S392). The disordered stretch occupies residues 393 to 512 (ADRSATPATD…AQESQRVETS (120 aa)). The segment covering 398–439 (TPATDGSATPATDGSVTPATDGSITPATDGSVTPATDRSATP) has biased composition (polar residues). Phosphothreonine is present on T446. Polar residues predominate over residues 449-460 (TEESTVPATQSS). Over residues 461–478 (ALPAAKAAATPEPAVAQP) the composition is skewed to low complexity. Position 470 is a phosphothreonine (T470).

The protein belongs to the protein kinase superfamily. CAMK Ser/Thr protein kinase family. Interacts with calmodulin, in the presence of calcium. It depends on Ca(2+) as a cofactor.

The protein resides in the cell membrane. It localises to the cytoplasmic vesicle membrane. In terms of biological role, does not appear to have detectable kinase activity. The polypeptide is CaM kinase-like vesicle-associated protein (Camkv) (Mus musculus (Mouse)).